The following is a 184-amino-acid chain: Large ribosomal subunit protein uL6 (184 aa).

Belongs to the universal ribosomal protein uL6 family. As to quaternary structure, part of the 50S ribosomal subunit.

Functionally, this protein binds to the 23S rRNA, and is important in its secondary structure. It is located near the subunit interface in the base of the L7/L12 stalk, and near the tRNA binding site of the peptidyltransferase center. The sequence is that of Large ribosomal subunit protein uL6 from Mycoplasma pneumoniae (strain ATCC 29342 / M129 / Subtype 1) (Mycoplasmoides pneumoniae).